The sequence spans 126 residues: uncharacterized protein (126 aa).

Residues 1 to 46 are disordered; sequence MREEEAAAVVTVPQAGRDGEQPGPPAGLGCAAVRGEPGGGGPQESR.

The protein resides in the cytoplasm. Its subcellular location is the cytoskeleton. The protein localises to the cilium basal body. This is an uncharacterized protein from Bos taurus (Bovine).